The primary structure comprises 307 residues: Potassium channel subfamily K member 7 (307 aa).

Topologically, residues 1-10 (MGGLRPWSRY) are cytoplasmic. A helical membrane pass occupies residues 11 to 31 (GLLVVAHLLALGLGAVVFQAL). N-linked (GlcNAc...) asparagine glycosylation is present at asparagine 83. The segment at residues 92 to 119 (LPSALLFAASILTTTGYGHMAPLSPGGK) is an intramembrane region (pore-forming). The helical transmembrane segment at 120–140 (AFCMVYAALGLPASLALVATL) threads the bilayer. Residues 141–170 (RHCLLPVLSRPRAWVAVHWQLSPARAALLQ) lie on the Cytoplasmic side of the membrane. Residues 171-191 (AVALGLLVASSFVLLPALVLW) form a helical membrane-spanning segment. Residues 199–227 (LLGAVYFCFSSLSTIGLEDLLPGRGRSLH) constitute an intramembrane region (pore-forming). Residues 233 to 253 (LGQLALLGYLLLGLLAMLLAV) form a helical membrane-spanning segment. Over 254–307 (ETFSELPQVRAMGKFFRPSGPVTAEDQGGILGQDELALSTLPPAAPASGQAPAC) the chain is Cytoplasmic.

This sequence belongs to the two pore domain potassium channel (TC 1.A.1.8) family. In terms of assembly, homodimer.

The protein localises to the membrane. Its function is as follows. Probable potassium channel subunit. No channel activity observed in vitro as protein remains in the endoplasmic reticulum. May need to associate with an as yet unknown partner in order to reach the plasma membrane. The polypeptide is Potassium channel subfamily K member 7 (KCNK7) (Homo sapiens (Human)).